Consider the following 183-residue polypeptide: GTP cyclohydrolase 1 (183 aa).

Residues C71, H74, and C142 each coordinate Zn(2+).

Belongs to the GTP cyclohydrolase I family. In terms of assembly, toroid-shaped homodecamer, composed of two pentamers of five dimers.

The catalysed reaction is GTP + H2O = 7,8-dihydroneopterin 3'-triphosphate + formate + H(+). It participates in cofactor biosynthesis; 7,8-dihydroneopterin triphosphate biosynthesis; 7,8-dihydroneopterin triphosphate from GTP: step 1/1. This chain is GTP cyclohydrolase 1, found in Leptospira interrogans serogroup Icterohaemorrhagiae serovar copenhageni (strain Fiocruz L1-130).